A 335-amino-acid chain; its full sequence is MPTPLALLLSAILIIGTYFAMPFWPFRKSNYDPRGKHCYITGGSSGLGKALAERLVKQGAHVTIVGRDSKKAEGVVEELKAIAAPGQIIQCIAADLTSPIASTNAIHAACKPHADQAPDYVYLCAGFSRPKLFVETTKQELKDGLDGVYWVSAYTAHEACQMMSKQRRTGKIIFVASFLSYVSFAGYSSYSPAKYALRGLSDALRSEMLLHNIDIHIFLPCGISGPGFDAENRTKPAVTKKIEEGDTPITPDVCAAALESGLKKGYYQITDNLVTEPIRLRSNGGVPTNNFLLDTLWLIVSSVGVPIWRMTADSAVRSFRAKVEKELEAKGYYVS.

NADPH contacts are provided by glycine 42, serine 44, serine 45, glycine 46, arginine 67, aspartate 68, lysine 71, aspartate 95, and leucine 96. Residues 42–46 carry the GXSXG motif; the sequence is GGSSG. Positions 141 to 207 are involved in homodimer formation; the sequence is LKDGLDGVYW…RGLSDALRSE (67 aa). The Proton acceptor role is filled by tyrosine 190. NADP(+) is bound by residues tyrosine 190, lysine 194, and isoleucine 223. Lysine 194 (lowers pKa of active site Tyr) is an active-site residue. Residues 288–308 form a helical membrane-spanning segment; it reads TNNFLLDTLWLIVSSVGVPIW.

It belongs to the short-chain dehydrogenases/reductases (SDR) family. In terms of assembly, homodimer; a minor portion forms homotetramers.

It is found in the endoplasmic reticulum membrane. It catalyses the reaction sphinganine + NADP(+) = 3-oxosphinganine + NADPH + H(+). The protein operates within lipid metabolism; sphingolipid metabolism. Its function is as follows. Catalyzes the reduction of 3'-oxosphinganine (3-ketodihydrosphingosine/KDS) to sphinganine (dihydrosphingosine/DHS), the second step of de novo sphingolipid biosynthesis. The polypeptide is 3-ketodihydrosphingosine reductase TSC10 (TSC10) (Cryptococcus neoformans var. neoformans serotype D (strain JEC21 / ATCC MYA-565) (Filobasidiella neoformans)).